The chain runs to 297 residues: PIH1 domain-containing protein 1 (297 aa).

It belongs to the PIH1 family.

It localises to the nucleus. Involved in the assembly of C/D box small nucleolar ribonucleoprotein (snoRNP) particles. Recruits the SWI/SNF complex to the core promoter of rRNA genes and enhances pre-rRNA transcription. Mediates interaction of TELO2 with the R2TP complex which is necessary for the stability of MTOR and SMG1. Positively regulates the assembly and activity of the mTORC1 complex. The polypeptide is PIH1 domain-containing protein 1 (pih1d1) (Xenopus laevis (African clawed frog)).